The primary structure comprises 421 residues: Lipid II:glycine glycyltransferase (421 aa).

The protein belongs to the FemABX family. In terms of assembly, monomer.

Its subcellular location is the cytoplasm. The catalysed reaction is beta-D-GlcNAc-(1-&gt;4)-Mur2Ac(oyl-L-Ala-D-isoglutaminyl-L-Lys-D-Ala-D-Ala)-di-trans,octa-cis-undecaprenyl diphosphate + glycyl-tRNA(Gly) = beta-D-GlcNAc-(1-&gt;4)-Mur2Ac(oyl-L-Ala-D-isoglutaminyl-L-Lys-(N(6)-Gly)-D-Ala-D-Ala)-di-trans,octa-cis-undecaprenyl diphosphate + tRNA(Gly) + H(+). Catalyzes the incorporation of the first glycine of the pentaglycine interpeptide bridge, which is characteristic of the S.aureus peptidoglycan. This glycine is added to the epsilon-amino group of the L-lysine of the membrane-bound lipid II intermediate (GlcNAc-(beta-1,4)-N-acetylmuramic acid(-L-Ala-D-iGln-L-Lys-D-Ala-D-Ala)-pyrophosphoryl-undecaprenol), using glycyl-tRNA(Gly) as donor, in a ribosome-independent mechanism. The chain is Lipid II:glycine glycyltransferase (femX) from Staphylococcus aureus (strain bovine RF122 / ET3-1).